The chain runs to 212 residues: Small ribosomal subunit protein eS6 (212 aa).

This sequence belongs to the eukaryotic ribosomal protein eS6 family.

The polypeptide is Small ribosomal subunit protein eS6 (Metallosphaera sedula (strain ATCC 51363 / DSM 5348 / JCM 9185 / NBRC 15509 / TH2)).